Reading from the N-terminus, the 263-residue chain is Undecaprenyl-diphosphatase 2 (263 aa).

Helical transmembrane passes span 17–37 (TEFL…LIGF), 42–62 (AKVF…VIFW), 83–103 (LHII…HSAI), 106–126 (VLFG…LMIV), 142–162 (ITYK…WPGF), 183–203 (AEYT…LDLI), 216–236 (LFAT…VSFL), and 242–262 (VKLT…YFFI).

This sequence belongs to the UppP family.

The protein localises to the cell membrane. The catalysed reaction is di-trans,octa-cis-undecaprenyl diphosphate + H2O = di-trans,octa-cis-undecaprenyl phosphate + phosphate + H(+). Its function is as follows. Catalyzes the dephosphorylation of undecaprenyl diphosphate (UPP). Confers resistance to bacitracin. The chain is Undecaprenyl-diphosphatase 2 from Bacillus anthracis.